A 560-amino-acid polypeptide reads, in one-letter code: Mitochondria-eating protein (560 aa).

The interval 1–294 (MADNLRKLVS…SHSRNHSRSR (294 aa)) is interaction with YWHAG/14-3-3 protein gamma. Phosphoserine occurs at positions 13, 85, 156, and 159. 2 coiled-coil regions span residues 118-186 (DRNI…SRHR) and 223-248 (DYEKQLRTLKDEIAVLSAEKSVLQGR). 2 disordered regions span residues 178–217 (QAQEESRHRPPEHRSSEKRGSERRRVEPRGADRCGAAQRK) and 243–316 (SVLQ…AKLS). The span at 181 to 209 (EESRHRPPEHRSSEKRGSERRRVEPRGAD) shows a compositional bias: basic and acidic residues. Low complexity predominate over residues 248-262 (RSTRSRSPSPASCSR). Over residues 263–293 (SRSHSHSRSRSHSHSRSGSHSRSHSRNHSRS) the composition is skewed to basic residues. The segment covering 300 to 310 (TAVSGVRSPSP) has biased composition (polar residues). 3 positions are modified to phosphoserine: Ser307, Ser309, and Ser531.

It belongs to the MIEAP family. As to quaternary structure, interacts (via coiled-coil domains) with BNIP3L (via BH3 domain). Interacts (via coiled-coil domains) with BNIP3 (via BH3 domain). Interacts with YWHAG/14-3-3 protein gamma; a protein that also plays a role in MALM.

The protein localises to the cytoplasm. It is found in the cytosol. The protein resides in the mitochondrion outer membrane. Its subcellular location is the mitochondrion matrix. Its function is as follows. Key regulator of mitochondrial quality that mediates the repairing or degradation of unhealthy mitochondria in response to mitochondrial damage. Mediator of mitochondrial protein catabolic process (also named MALM) by mediating the degradation of damaged proteins inside mitochondria by promoting the accumulation in the mitochondrial matrix of hydrolases that are characteristic of the lysosomal lumen. Also involved in mitochondrion degradation of damaged mitochondria by promoting the formation of vacuole-like structures (named MIV), which engulf and degrade unhealthy mitochondria by accumulating lysosomes. The physical interaction of SPATA18/MIEAP, BNIP3 and BNIP3L/NIX at the mitochondrial outer membrane regulates the opening of a pore in the mitochondrial double membrane in order to mediate the translocation of lysosomal proteins from the cytoplasm to the mitochondrial matrix. Binds cardiolipin. May form molecular condensates (non-membrane-bounded organelles) within mitochondria that compartmentalize and promote cardiolipin metabolism. This Sus scrofa (Pig) protein is Mitochondria-eating protein (SPATA18).